The chain runs to 150 residues: Flagellar assembly factor FliW (150 aa).

The protein belongs to the FliW family. In terms of assembly, interacts with translational regulator CsrA and flagellin(s).

It is found in the cytoplasm. Acts as an anti-CsrA protein, binds CsrA and prevents it from repressing translation of its target genes, one of which is flagellin. Binds to flagellin and participates in the assembly of the flagellum. The polypeptide is Flagellar assembly factor FliW (Leptospira interrogans serogroup Icterohaemorrhagiae serovar Lai (strain 56601)).